Consider the following 387-residue polypeptide: Paralemmin-1 (387 aa).

An N-acetylmethionine modification is found at Met-1. The stretch at 9 to 101 (TSQQERLQAI…EKEIEVLERG (93 aa)) forms a coiled coil. 2 stretches are compositionally biased toward basic and acidic residues: residues 31 to 41 (KRRQLEDERRQ) and 69 to 102 (DLRR…ERGD). Residues 31-160 (KRRQLEDERR…VSNTPLRTVD (130 aa)) are disordered. Residues 104-117 (APATAKENAAAPSP) show a composition bias toward low complexity. Residues Ser-116 and Ser-124 each carry the phosphoserine modification. A phosphothreonine mark is found at Thr-141 and Thr-145. A Phosphoserine modification is found at Ser-162. Thr-243 carries the phosphothreonine modification. Phosphoserine is present on Ser-245. Disordered regions lie at residues 247-296 (AGST…GQEP) and 335-378 (AEPK…DMKK). The span at 286 to 296 (GPPGIQPGQEP) shows a compositional bias: low complexity. The residue at position 346 (Ser-346) is a Phosphoserine. A Phosphothreonine modification is found at Thr-367. Ser-369 is modified (phosphoserine). 2 S-palmitoyl cysteine lipidation sites follow: Cys-381 and Cys-383. Cys-384 is modified (cysteine methyl ester). A lipid anchor (S-farnesyl cysteine) is attached at Cys-384. Positions 385–387 (SIM) are cleaved as a propeptide — removed in mature form.

This sequence belongs to the paralemmin family. In terms of assembly, interacts with dopamine receptor DRD3. As to expression, widely expressed with highest expression in brain and testis and intermediate expression in heart and adrenal gland.

It localises to the cell membrane. The protein localises to the cell projection. The protein resides in the filopodium membrane. Its subcellular location is the axon. It is found in the dendrite. It localises to the dendritic spine. The protein localises to the basolateral cell membrane. The protein resides in the apicolateral cell membrane. In terms of biological role, involved in plasma membrane dynamics and cell process formation. Isoform 1 and isoform 2 are necessary for axonal and dendritic filopodia induction, for dendritic spine maturation and synapse formation in a palmitoylation-dependent manner. In Homo sapiens (Human), this protein is Paralemmin-1 (PALM).